The chain runs to 302 residues: Methionyl-tRNA formyltransferase (302 aa).

109–112 (SILP) provides a ligand contact to (6S)-5,6,7,8-tetrahydrofolate.

The protein belongs to the Fmt family.

It catalyses the reaction L-methionyl-tRNA(fMet) + (6R)-10-formyltetrahydrofolate = N-formyl-L-methionyl-tRNA(fMet) + (6S)-5,6,7,8-tetrahydrofolate + H(+). Attaches a formyl group to the free amino group of methionyl-tRNA(fMet). The formyl group appears to play a dual role in the initiator identity of N-formylmethionyl-tRNA by promoting its recognition by IF2 and preventing the misappropriation of this tRNA by the elongation apparatus. The polypeptide is Methionyl-tRNA formyltransferase (Campylobacter hominis (strain ATCC BAA-381 / DSM 21671 / CCUG 45161 / LMG 19568 / NCTC 13146 / CH001A)).